The chain runs to 89 residues: Small ribosomal subunit protein uS15 (89 aa).

The protein belongs to the universal ribosomal protein uS15 family. Part of the 30S ribosomal subunit. Forms a bridge to the 50S subunit in the 70S ribosome, contacting the 23S rRNA.

Its function is as follows. One of the primary rRNA binding proteins, it binds directly to 16S rRNA where it helps nucleate assembly of the platform of the 30S subunit by binding and bridging several RNA helices of the 16S rRNA. Forms an intersubunit bridge (bridge B4) with the 23S rRNA of the 50S subunit in the ribosome. This is Small ribosomal subunit protein uS15 from Rippkaea orientalis (strain PCC 8801 / RF-1) (Cyanothece sp. (strain PCC 8801)).